The sequence spans 242 residues: Segregation and condensation protein A (242 aa).

It belongs to the ScpA family. As to quaternary structure, component of a cohesin-like complex composed of ScpA, ScpB and the Smc homodimer, in which ScpA and ScpB bind to the head domain of Smc. The presence of the three proteins is required for the association of the complex with DNA.

It localises to the cytoplasm. In terms of biological role, participates in chromosomal partition during cell division. May act via the formation of a condensin-like complex containing Smc and ScpB that pull DNA away from mid-cell into both cell halves. This chain is Segregation and condensation protein A, found in Lactococcus lactis subsp. cremoris (strain MG1363).